The chain runs to 504 residues: Xylose import ATP-binding protein XylG (504 aa).

ABC transporter domains are found at residues 6 to 243 (LEMK…VGRE) and 260 to 504 (LKVD…TGGK). 38-45 (GENGAGKS) provides a ligand contact to ATP.

This sequence belongs to the ABC transporter superfamily. Xylose importer (TC 3.A.1.2.4) family. The complex is composed of two ATP-binding proteins (XylG), two transmembrane proteins (XylH) and a solute-binding protein (XylF).

Its subcellular location is the cell membrane. It carries out the reaction D-xylose(out) + ATP + H2O = D-xylose(in) + ADP + phosphate + H(+). Functionally, part of the ABC transporter complex XylFGH involved in xylose import. Responsible for energy coupling to the transport system. This Geobacillus kaustophilus (strain HTA426) protein is Xylose import ATP-binding protein XylG.